The primary structure comprises 167 residues: Crossover junction endodeoxyribonuclease RuvC (167 aa).

Residues Asp-8, Glu-68, and Asp-140 contribute to the active site. Positions 8, 68, and 140 each coordinate Mg(2+).

This sequence belongs to the RuvC family. Homodimer which binds Holliday junction (HJ) DNA. The HJ becomes 2-fold symmetrical on binding to RuvC with unstacked arms; it has a different conformation from HJ DNA in complex with RuvA. In the full resolvosome a probable DNA-RuvA(4)-RuvB(12)-RuvC(2) complex forms which resolves the HJ. Mg(2+) is required as a cofactor.

It localises to the cytoplasm. It carries out the reaction Endonucleolytic cleavage at a junction such as a reciprocal single-stranded crossover between two homologous DNA duplexes (Holliday junction).. In terms of biological role, the RuvA-RuvB-RuvC complex processes Holliday junction (HJ) DNA during genetic recombination and DNA repair. Endonuclease that resolves HJ intermediates. Cleaves cruciform DNA by making single-stranded nicks across the HJ at symmetrical positions within the homologous arms, yielding a 5'-phosphate and a 3'-hydroxyl group; requires a central core of homology in the junction. The consensus cleavage sequence is 5'-(A/T)TT(C/G)-3'. Cleavage occurs on the 3'-side of the TT dinucleotide at the point of strand exchange. HJ branch migration catalyzed by RuvA-RuvB allows RuvC to scan DNA until it finds its consensus sequence, where it cleaves and resolves the cruciform DNA. The polypeptide is Crossover junction endodeoxyribonuclease RuvC (Sinorhizobium medicae (strain WSM419) (Ensifer medicae)).